The sequence spans 738 residues: MIGNDRWVTEIETGPVTEARPDTNAREPGDRTPAAPPAATPAATTDQLPEDRYLNRELSWLEFNARVLALAADDSMPLLERAKFLAVFASNLDEFYMVRVAGLKRRDQMGLSALSADGLTPREQLGRIGEQTQHIASRHARVFRDSVLPALGEEGIYVVTWADLDQAEREQLSTYFHEQVFPVLTPLAVDPAHPFPFVSGLSLNLAVTVRQPEDGGQHFARVKVPDNVDRFVELGGTDTDGAEGAAVHRFLPLEELIAAFLPVLFPGMEIVEHHAFRITRNADFEVEEDRDEDLLQALERELARRRFGSPVRLEVADDMTEGMLELLLRELDVHPGDVIEVPGLLDLSSLWQIYGLDRPALKDRTFVPATHPAFAERETPKSIFATLREGDVLVHHPYYSFSTSVQRFIEQAAADPNVLAIKQTLYRTSGDSPIVRALIDAAEAGKQVVALVEVKARFDEQANIRWARALEQAGVHVAYGIVGLKTHCKTALVVRREGPVIRRYCHIGTGNYNSKTARLYEDVGLLTAAPDIGADLTDLFNSLTGYSRKLSYRNLLVAPHGIRAGIIERVEREVAAHLEHGPQAGKGHIRLKMNALVDEQVTDALYRASQVGVRIEVVVRGICALRPGAEGFSENITARSILGRFLEHSRILHFRAIDEFWIGSADMMHRNLDRRVEVMAQVKDPRLTAQLDDLFESALDPATRCWELGPDGQWTASPQEGRTVRDHQVSLMERHRSP.

The interval methionine 1–leucine 48 is disordered. The segment covering alanine 19–aspartate 30 has biased composition (basic and acidic residues). Asparagine 91 is an ATP binding site. Positions 427 and 457 each coordinate Mg(2+). The Phosphohistidine intermediate role is filled by histidine 487. Residues tyrosine 520, arginine 620, and histidine 648 each contribute to the ATP site.

It belongs to the polyphosphate kinase 1 (PPK1) family. Mg(2+) serves as cofactor. In terms of processing, an intermediate of this reaction is the autophosphorylated ppk in which a phosphate is covalently linked to a histidine residue through a N-P bond.

It catalyses the reaction [phosphate](n) + ATP = [phosphate](n+1) + ADP. Functionally, catalyzes the reversible transfer of the terminal phosphate of ATP to form a long-chain polyphosphate (polyP). This Mycobacterium ulcerans (strain Agy99) protein is Polyphosphate kinase.